The chain runs to 191 residues: Putative acetyltransferase DDB_G0280825 (191 aa).

The protein belongs to the transferase hexapeptide repeat family.

In Dictyostelium discoideum (Social amoeba), this protein is Putative acetyltransferase DDB_G0280825.